The following is a 91-amino-acid chain: DNA-directed RNA polymerase subunit omega (91 aa).

It belongs to the RNA polymerase subunit omega family. The RNAP catalytic core consists of 2 alpha, 1 beta, 1 beta' and 1 omega subunit. When a sigma factor is associated with the core the holoenzyme is formed, which can initiate transcription.

The enzyme catalyses RNA(n) + a ribonucleoside 5'-triphosphate = RNA(n+1) + diphosphate. In terms of biological role, promotes RNA polymerase assembly. Latches the N- and C-terminal regions of the beta' subunit thereby facilitating its interaction with the beta and alpha subunits. In Sodalis glossinidius (strain morsitans), this protein is DNA-directed RNA polymerase subunit omega.